The primary structure comprises 442 residues: 5-methylthioadenosine/S-adenosylhomocysteine deaminase (442 aa).

Zn(2+) contacts are provided by His-70 and His-72. The substrate site is built by Glu-99 and His-191. His-218 contacts Zn(2+). Substrate-binding residues include Glu-221 and Asp-306. Asp-306 lines the Zn(2+) pocket.

This sequence belongs to the metallo-dependent hydrolases superfamily. MTA/SAH deaminase family. It depends on Zn(2+) as a cofactor.

The catalysed reaction is S-adenosyl-L-homocysteine + H2O + H(+) = S-inosyl-L-homocysteine + NH4(+). It catalyses the reaction S-methyl-5'-thioadenosine + H2O + H(+) = S-methyl-5'-thioinosine + NH4(+). Its function is as follows. Catalyzes the deamination of 5-methylthioadenosine and S-adenosyl-L-homocysteine into 5-methylthioinosine and S-inosyl-L-homocysteine, respectively. Is also able to deaminate adenosine. In Nitratidesulfovibrio vulgaris (strain ATCC 29579 / DSM 644 / CCUG 34227 / NCIMB 8303 / VKM B-1760 / Hildenborough) (Desulfovibrio vulgaris), this protein is 5-methylthioadenosine/S-adenosylhomocysteine deaminase.